We begin with the raw amino-acid sequence, 438 residues long: tRNA-dihydrouridine(16/17) synthase [NAD(P)(+)]-like (438 aa).

FMN contacts are provided by residues 23 to 25 and glutamine 79; that span reads PMV. Residue cysteine 108 is the Proton donor of the active site. FMN is bound by residues lysine 147, histidine 175, 208-210, and 232-233; these read NGN and AE. Positions 343-387 are disordered; the sequence is GPKEGSKENSSGRSKRALEEEEGSMEGLSKNKLKKQLRNPHKTFD. Basic residues predominate over residues 373 to 383; the sequence is NKLKKQLRNPH.

The protein belongs to the Dus family. Dus1 subfamily. FMN is required as a cofactor.

The protein localises to the cytoplasm. Its subcellular location is the nucleus. The enzyme catalyses 5,6-dihydrouridine(16) in tRNA + NADP(+) = uridine(16) in tRNA + NADPH + H(+). The catalysed reaction is 5,6-dihydrouridine(16) in tRNA + NAD(+) = uridine(16) in tRNA + NADH + H(+). It carries out the reaction 5,6-dihydrouridine(17) in tRNA + NAD(+) = uridine(17) in tRNA + NADH + H(+). It catalyses the reaction 5,6-dihydrouridine(17) in tRNA + NADP(+) = uridine(17) in tRNA + NADPH + H(+). Its function is as follows. Catalyzes the synthesis of dihydrouridine, a modified base found in the D-loop of most tRNAs. Specifically modifies U16 and U17 in cytoplasmic tRNAs. Affects the level of some mature tRNA and thereby the total cellular translation. The sequence is that of tRNA-dihydrouridine(16/17) synthase [NAD(P)(+)]-like (Dus1l) from Rattus norvegicus (Rat).